The following is a 154-amino-acid chain: Large ribosomal subunit protein uL13 (154 aa).

A disordered region spans residues 129 to 154; sequence SQHPHEAQQPEALDVGTLNRKNKRIA.

Belongs to the universal ribosomal protein uL13 family. As to quaternary structure, part of the 50S ribosomal subunit.

This protein is one of the early assembly proteins of the 50S ribosomal subunit, although it is not seen to bind rRNA by itself. It is important during the early stages of 50S assembly. In Bartonella bacilliformis (strain ATCC 35685 / KC583 / Herrer 020/F12,63), this protein is Large ribosomal subunit protein uL13.